A 255-amino-acid polypeptide reads, in one-letter code: 5'-nucleotidase SurE (255 aa).

4 residues coordinate a divalent metal cation: D8, D9, S40, and N95.

Belongs to the SurE nucleotidase family. The cofactor is a divalent metal cation.

The protein localises to the cytoplasm. It carries out the reaction a ribonucleoside 5'-phosphate + H2O = a ribonucleoside + phosphate. Functionally, nucleotidase that shows phosphatase activity on nucleoside 5'-monophosphates. The chain is 5'-nucleotidase SurE from Solidesulfovibrio magneticus (strain ATCC 700980 / DSM 13731 / RS-1) (Desulfovibrio magneticus).